Consider the following 478-residue polypeptide: Sphingomyelin synthase-related protein 1 (478 aa).

The segment covering 1–22 has biased composition (low complexity); sequence MPAGSRAGSRLRSGSLPRPSRL. Positions 1-65 are disordered; that stretch reads MPAGSRAGSR…TAEEVEKEMA (65 aa). The region spanning 75–141 is the SAM domain; that stretch reads WTTKHVAVWL…MLSVRKLQKI (67 aa). Transmembrane regions (helical) follow at residues 216 to 236, 264 to 284, 295 to 315, 341 to 361, 385 to 405, and 410 to 430; these read ILSC…MVIV, FSMT…VLLL, LCSL…VTSL, AIWS…DYMF, FLHT…LAAH, and IDVF…HTLA. The Cytoplasmic portion of the chain corresponds to 431 to 478; that stretch reads NTRAYHQSRRARIWFPMFSFFECNVNGTVPNEYCWPFSKPAIMKRLIG.

Belongs to the sphingomyelin synthase family. As to expression, expressed ubiquitously with highest levels in macrophages and testis.

It localises to the endoplasmic reticulum membrane. It catalyses the reaction an N-acylsphing-4-enine + a 1,2-diacyl-sn-glycero-3-phosphoethanolamine = an N-acylsphing-4-enine 1-phosphoethanolamine + a 1,2-diacyl-sn-glycerol. It carries out the reaction an N-acylsphinganine + a 1,2-diacyl-sn-glycero-3-phosphoethanolamine = an N-acylsphinganine-1-phosphoethanolamine + a 1,2-diacyl-sn-glycerol. The catalysed reaction is an N-acyl-(4R)-4-hydroxysphinganine + a 1,2-diacyl-sn-glycero-3-phosphoethanolamine = an N-acyl-(4R)-4-hydroxysphinganine-1-phosphoethanolamine + a 1,2-diacyl-sn-glycerol. The enzyme catalyses N-hexadecanoylsphinganine + a 1,2-diacyl-sn-glycero-3-phosphoethanolamine = N-hexadecanoyl-sphinganine-1-phosphoethanolamine + a 1,2-diacyl-sn-glycerol. It catalyses the reaction N-hexadecanoyl-(4R)-hydroxysphinganine + a 1,2-diacyl-sn-glycero-3-phosphoethanolamine = N-hexadecanoyl-(4R)-hydroxysphinganine-1-phosphoethanolamine + a 1,2-diacyl-sn-glycerol. It participates in sphingolipid metabolism. Its function is as follows. Synthesizes sphingolipids through transfer of a phosphatidyl head group from a glycerophospholipid on to the primary hydroxyl of a ceramide in the lumen of the endoplasmic reticulum. Catalyzes the synthesis of ceramide phosphoethanolamines (CPEs) (such as N-acylsphing-4-enine 1-phosphoethanolamine) by transferring phosphoethanolamine head group, which is smaller and more hydrophilic than the phosphocholine (PC) headgroup transferred in the canonical sphingomyelin synthesis (SMS) reaction by SMS1 or SMS2, from a phosphatidylethanolamine (1,2-diacyl-sn-glycero-3-phosphoethanolamine, PE) to a ceramide (such as N-acylsphing-4-enine). The larger PC prevents an efficient fit in the enzyme's catalytic pocket, leading to little or no SMS activity. In vitro, in the absence of ceramide, it has PLC activity with preference for phosphatidylinositol and phosphatidic acid, but also hydrolyzes phosphatidylethanolamine. This is Sphingomyelin synthase-related protein 1 from Mus musculus (Mouse).